A 25-amino-acid polypeptide reads, in one-letter code: Css54 (25 aa).

In terms of tissue distribution, expressed by the venom gland.

Its subcellular location is the secreted. It is found in the target cell membrane. In terms of biological role, amphipathic peptide that shows antibacterial activity against E.coli (MIC=12.5 ug/ml) and S.aureus (MIC=12.5 ug/ml). Has hemolytic activity against human erythrocytes (25 uM provokes 83% of hemolysis). May act by disrupting the integrity of the bacterial cell membrane. Increases efficacy of antibiotics (ethambutol, pyrazinamide, isoniazid, rifampicin) when tested against S.aureus, probably by facilitating their incorporation into the bacteria. The protein is Css54 of Centruroides suffusus (Durango bark scorpion).